The sequence spans 334 residues: F-box only protein 16 (334 aa).

One can recognise an F-box domain in the interval L86–K132. Disordered regions lie at residues P168–S222 and L314–S334. Low complexity predominate over residues S194 to S204. The span at N210–S222 shows a compositional bias: basic and acidic residues. Over residues L323–S334 the composition is skewed to low complexity.

Part of a SCF (SKP1-cullin-F-box) protein ligase complex.

Functionally, probably recognizes and binds to some phosphorylated proteins and promotes their ubiquitination and degradation. In Mus musculus (Mouse), this protein is F-box only protein 16 (Fbxo16).